A 431-amino-acid chain; its full sequence is Trigger factor (431 aa).

A PPIase FKBP-type domain is found at 163–248 (GDTVVIDYAG…IHEVKGKELP (86 aa)).

It belongs to the FKBP-type PPIase family. Tig subfamily.

The protein resides in the cytoplasm. It carries out the reaction [protein]-peptidylproline (omega=180) = [protein]-peptidylproline (omega=0). In terms of biological role, involved in protein export. Acts as a chaperone by maintaining the newly synthesized protein in an open conformation. Functions as a peptidyl-prolyl cis-trans isomerase. This Latilactobacillus sakei subsp. sakei (strain 23K) (Lactobacillus sakei subsp. sakei) protein is Trigger factor.